We begin with the raw amino-acid sequence, 388 residues long: Ferrochelatase (388 aa).

Residues His196 and Glu277 each contribute to the Fe cation site.

It belongs to the ferrochelatase family.

The protein localises to the cytoplasm. It carries out the reaction heme b + 2 H(+) = protoporphyrin IX + Fe(2+). The protein operates within porphyrin-containing compound metabolism; protoheme biosynthesis; protoheme from protoporphyrin-IX: step 1/1. Functionally, catalyzes the ferrous insertion into protoporphyrin IX. This chain is Ferrochelatase, found in Nostoc sp. (strain PCC 7120 / SAG 25.82 / UTEX 2576).